Reading from the N-terminus, the 249-residue chain is uncharacterized protein (249 aa).

Positions 7–64 (PRVHVFLAEKGVGSRRFCEELIRKKLVRVNNTIAKLGDKVTLGDRIIYKKQIFVFKDF) constitute an S4 RNA-binding domain. The Nucleophile role is filled by Asp-112.

The protein belongs to the pseudouridine synthase RsuA family.

It catalyses the reaction a uridine in RNA = a pseudouridine in RNA. This is an uncharacterized protein from Borreliella burgdorferi (strain ATCC 35210 / DSM 4680 / CIP 102532 / B31) (Borrelia burgdorferi).